A 351-amino-acid chain; its full sequence is Phosphate acyltransferase (351 aa).

This sequence belongs to the PlsX family. Homodimer. Probably interacts with PlsY.

Its subcellular location is the cytoplasm. The catalysed reaction is a fatty acyl-[ACP] + phosphate = an acyl phosphate + holo-[ACP]. Its pathway is lipid metabolism; phospholipid metabolism. In terms of biological role, catalyzes the reversible formation of acyl-phosphate (acyl-PO(4)) from acyl-[acyl-carrier-protein] (acyl-ACP). This enzyme utilizes acyl-ACP as fatty acyl donor, but not acyl-CoA. The protein is Phosphate acyltransferase of Maricaulis maris (strain MCS10) (Caulobacter maris).